The sequence spans 123 residues: Ribosome-binding factor A (123 aa).

It belongs to the RbfA family. In terms of assembly, monomer. Binds 30S ribosomal subunits, but not 50S ribosomal subunits or 70S ribosomes.

The protein resides in the cytoplasm. In terms of biological role, one of several proteins that assist in the late maturation steps of the functional core of the 30S ribosomal subunit. Associates with free 30S ribosomal subunits (but not with 30S subunits that are part of 70S ribosomes or polysomes). Required for efficient processing of 16S rRNA. May interact with the 5'-terminal helix region of 16S rRNA. In Koribacter versatilis (strain Ellin345), this protein is Ribosome-binding factor A.